The chain runs to 535 residues: MFSWLGNDDRRKKDPEVFQTVSEGLKKLYKTKLLPLEEYYRFHEFHSPALEDADFDNKPMVLLVGQYSTGKTTFIRYLLEQDFPGMRIGPEPTTDSFIAVMQGDVEGIIPGNALVVDPKKPFRKLNAFGNAFLNRFVCAQLPNAVLESISVIDTPGILSGEKQRISRGYDFAAVLEWFAERVDRIILLFDAHKLDISDEFSEVIKALKNHEDKMRVVLNKADQIETQQLMRVYGALMWSLGKIVNTPEVIRVYIGSFWSHPLLIPDNRKLFEAEEQDLFKDIQSLPRNAALRKLNDLIKRARLAKVHAYIISSLKKEMPSVFGKDTKKKELVNNLAEIYGRIEREHQISPGDFPNLKRMQDQLQAQDFSKFQPLKSKLLEVVDDMLAHDIAQLMVLVRQEETQRPVQMVKGGAFEGTLQGPFGHGYGEGAGEGIDDAEWVVARDKPMYDEIFYTLSPVDGKITGANAKKEMVRSKLPNSVLGKIWKLADIDKDGMLDDEEFALANHLIKVKLEGHELPSELPAHLLPPSKRKVAE.

M1 carries the post-translational modification N-acetylmethionine. One can recognise a Dynamin-type G domain in the interval F55–P286. The interval G65–T72 is G1 motif. G65 to T72 serves as a coordination point for ATP. A G2 motif region spans residues E91–P92. Residues D153–G156 form a G3 motif region. Positions D198–Q227 form a coiled coil. Residues N219–D222 are G4 motif. Position 220 (K220) interacts with ATP. A region of interest (G5 motif) is located at residue I243. W258 is a binding site for ATP. Residue K315 forms a Glycyl lysine isopeptide (Lys-Gly) (interchain with G-Cter in SUMO) linkage. 2 positions are modified to phosphoserine: S349 and S456. Positions D444–K532 constitute an EH domain. The EF-hand domain maps to L476–K511. The Ca(2+) site is built by D489, D491, D493, M495, and E500. Residue K511 forms a Glycyl lysine isopeptide (Lys-Gly) (interchain with G-Cter in SUMO) linkage.

Belongs to the TRAFAC class dynamin-like GTPase superfamily. Dynamin/Fzo/YdjA family. EHD subfamily. As to quaternary structure, homooligomer, and heterooligomer with EHD1, EHD2 and EHD4, ATP-binding is required for heterooligomerization. Interacts with PACSIN1. Interacts with PACSIN2. Interacts (via EH domain) with MICALL1. Interacts (via EH domain) with RAB11FIP2. Interacts with ANK2. Interacts with CACNA1GG and CACNA1H.

The protein localises to the recycling endosome membrane. It localises to the cell membrane. The protein resides in the cell projection. Its subcellular location is the cilium membrane. Functionally, ATP- and membrane-binding protein that controls membrane reorganization/tubulation upon ATP hydrolysis. In vitro causes tubulation of endocytic membranes. Binding to phosphatidic acid induces its membrane tubulation activity. Plays a role in endocytic transport. Involved in early endosome to recycling endosome compartment (ERC), retrograde early endosome to Golgi, and endosome to plasma membrane (rapid recycling) protein transport. Involved in the regulation of Golgi maintenance and morphology. Involved in the recycling of internalized D1 dopamine receptor. Plays a role in cardiac protein trafficking probably implicating ANK2. Involved in the ventricular membrane targeting of SLC8A1 and CACNA1C and probably the atrial membrane localization of CACNA1GG and CACNA1H implicated in the regulation of atrial myocyte excitability and cardiac conduction. In conjunction with EHD4 may be involved in endocytic trafficking of KDR/VEGFR2 implicated in control of glomerular function. Involved in the rapid recycling of integrin beta-3 implicated in cell adhesion maintenance. Involved in the unidirectional retrograde dendritic transport of endocytosed BACE1 and in efficient sorting of BACE1 to axons implicating a function in neuronal APP processing. Plays a role in the formation of the ciliary vesicle, an early step in cilium biogenesis; possibly sharing redundant functions with Ehd1. This chain is EH domain-containing protein 3, found in Rattus norvegicus (Rat).